An 828-amino-acid chain; its full sequence is Beta-galactosidase 13 (828 aa).

The N-terminal stretch at 1 to 23 (MKTTMAAAATCLVALLVVVLAEA) is a signal peptide. Asn157 carries an N-linked (GlcNAc...) asparagine glycan. Catalysis depends on Glu187, which acts as the Proton donor. Residues Asn198 and Asn249 are each glycosylated (N-linked (GlcNAc...) asparagine). Catalysis depends on Glu259, which acts as the Nucleophile. Asn260, Asn362, Asn366, Asn392, Asn502, Asn578, Asn586, and Asn615 each carry an N-linked (GlcNAc...) asparagine glycan. The SUEL-type lectin domain maps to 746–828 (AEVGDAITLS…SGVLTVQASC (83 aa)).

It belongs to the glycosyl hydrolase 35 family.

It is found in the secreted. The protein localises to the extracellular space. It localises to the apoplast. It carries out the reaction Hydrolysis of terminal non-reducing beta-D-galactose residues in beta-D-galactosides.. This Oryza sativa subsp. japonica (Rice) protein is Beta-galactosidase 13.